We begin with the raw amino-acid sequence, 181 residues long: Cytochrome c-type biogenesis protein CcmE (181 aa).

At 1–8 (MNPRRKSR) the chain is on the cytoplasmic side. The helical; Signal-anchor for type II membrane protein transmembrane segment at 9-29 (LKVVVLIMFSVAVAAGLTLYA) threads the bilayer. Topologically, residues 30–181 (LSQNIDLFYT…TFNTLQGESK (152 aa)) are periplasmic. Heme is bound by residues His131 and Tyr135.

Belongs to the CcmE/CycJ family.

Its subcellular location is the cell inner membrane. Its function is as follows. Heme chaperone required for the biogenesis of c-type cytochromes. Transiently binds heme delivered by CcmC and transfers the heme to apo-cytochromes in a process facilitated by CcmF and CcmH. The sequence is that of Cytochrome c-type biogenesis protein CcmE from Haemophilus ducreyi (strain 35000HP / ATCC 700724).